The following is a 303-amino-acid chain: Glycine--tRNA ligase alpha subunit (303 aa).

Belongs to the class-II aminoacyl-tRNA synthetase family. Tetramer of two alpha and two beta subunits.

Its subcellular location is the cytoplasm. It catalyses the reaction tRNA(Gly) + glycine + ATP = glycyl-tRNA(Gly) + AMP + diphosphate. The polypeptide is Glycine--tRNA ligase alpha subunit (Salmonella arizonae (strain ATCC BAA-731 / CDC346-86 / RSK2980)).